A 169-amino-acid chain; its full sequence is X polypeptide (169 aa).

This sequence belongs to the IagB/IpgF/P19 family.

The chain is X polypeptide (X) from Escherichia coli.